The following is a 91-amino-acid chain: N(2)-fixation sustaining protein CowN (91 aa).

It belongs to the CowN family.

Is required to sustain N(2)-dependent growth in the presence of low levels of carbon monoxide (CO). Probably acts by protecting the N(2) fixation ability of the nitrogenase complex, which is inactivated in the presence of CO. This Gluconacetobacter diazotrophicus (strain ATCC 49037 / DSM 5601 / CCUG 37298 / CIP 103539 / LMG 7603 / PAl5) protein is N(2)-fixation sustaining protein CowN.